Consider the following 107-residue polypeptide: Large ribosomal subunit protein uL24 (107 aa).

It belongs to the universal ribosomal protein uL24 family. Part of the 50S ribosomal subunit.

In terms of biological role, one of two assembly initiator proteins, it binds directly to the 5'-end of the 23S rRNA, where it nucleates assembly of the 50S subunit. One of the proteins that surrounds the polypeptide exit tunnel on the outside of the subunit. This Carboxydothermus hydrogenoformans (strain ATCC BAA-161 / DSM 6008 / Z-2901) protein is Large ribosomal subunit protein uL24.